Reading from the N-terminus, the 351-residue chain is Histidine protein kinase SaeS (351 aa).

The next 2 membrane-spanning stretches (helical) occupy residues 9–29 and 40–60; these read IIIG…IAYI and TLTL…SIFI. The HAMP domain occupies 61–114; sequence NPLIQKIKQFNIKTKQFANGNYASNDKTFNSPKEIYELNQSFNKMASEITQQMN. The Histidine kinase domain maps to 129-348; that stretch reads NLAHDLKTPL…TMTVTLHKLD (220 aa). H132 is modified (phosphohistidine; by autocatalysis).

Post-translationally, autophosphorylated.

It is found in the cell membrane. The catalysed reaction is ATP + protein L-histidine = ADP + protein N-phospho-L-histidine.. In terms of biological role, member of the two-component regulatory system SaeR/SaeS involved in the regulation of staphylococcal virulence factors in a strain-dependent fashion. Probably functions as a membrane-associated protein kinase that upon sensing the appropriate signal, autophosphorylates and in turn activates the cytosolic response regulator SaeR. This chain is Histidine protein kinase SaeS (saeS), found in Staphylococcus aureus (strain bovine RF122 / ET3-1).